The chain runs to 286 residues: Bifunctional protein FolD (286 aa).

Residues 165–167 (GRS) and S190 each bind NADP(+).

It belongs to the tetrahydrofolate dehydrogenase/cyclohydrolase family. Homodimer.

The enzyme catalyses (6R)-5,10-methylene-5,6,7,8-tetrahydrofolate + NADP(+) = (6R)-5,10-methenyltetrahydrofolate + NADPH. The catalysed reaction is (6R)-5,10-methenyltetrahydrofolate + H2O = (6R)-10-formyltetrahydrofolate + H(+). The protein operates within one-carbon metabolism; tetrahydrofolate interconversion. Functionally, catalyzes the oxidation of 5,10-methylenetetrahydrofolate to 5,10-methenyltetrahydrofolate and then the hydrolysis of 5,10-methenyltetrahydrofolate to 10-formyltetrahydrofolate. The sequence is that of Bifunctional protein FolD from Staphylococcus epidermidis (strain ATCC 35984 / DSM 28319 / BCRC 17069 / CCUG 31568 / BM 3577 / RP62A).